The chain runs to 380 residues: Chaperone protein DnaJ 2 (380 aa).

Residues 10–75 form the J domain; the sequence is DYYKILGVSK…KKRKEYDQAR (66 aa). The span at 32–56 shows a compositional bias: basic and acidic residues; the sequence is KIARDNHPDSHPGDKAAEARFKEAS. A disordered region spans residues 32–63; that stretch reads KIARDNHPDSHPGDKAAEARFKEASEANDVLS. The segment at 151–230 adopts a CR-type zinc-finger fold; it reads GTTVTMDMVS…CHGSGRAKST (80 aa). 8 residues coordinate Zn(2+): Cys164, Cys167, Cys181, Cys184, Cys204, Cys207, Cys218, and Cys221. 4 CXXCXGXG motif repeats span residues 164–171, 181–188, 204–211, and 218–225; these read CQACRGTG, CSTCQGSG, CPDCHGRG, and CQVCHGSG.

This sequence belongs to the DnaJ family. As to quaternary structure, homodimer. The cofactor is Zn(2+).

Its subcellular location is the cytoplasm. Participates actively in the response to hyperosmotic and heat shock by preventing the aggregation of stress-denatured proteins and by disaggregating proteins, also in an autonomous, DnaK-independent fashion. Unfolded proteins bind initially to DnaJ; upon interaction with the DnaJ-bound protein, DnaK hydrolyzes its bound ATP, resulting in the formation of a stable complex. GrpE releases ADP from DnaK; ATP binding to DnaK triggers the release of the substrate protein, thus completing the reaction cycle. Several rounds of ATP-dependent interactions between DnaJ, DnaK and GrpE are required for fully efficient folding. Also involved, together with DnaK and GrpE, in the DNA replication of plasmids through activation of initiation proteins. This chain is Chaperone protein DnaJ 2, found in Cutibacterium acnes (strain DSM 16379 / KPA171202) (Propionibacterium acnes).